A 363-amino-acid polypeptide reads, in one-letter code: Peptide chain release factor 2 (363 aa).

Q251 carries the N5-methylglutamine modification.

This sequence belongs to the prokaryotic/mitochondrial release factor family. Post-translationally, methylated by PrmC. Methylation increases the termination efficiency of RF2.

It localises to the cytoplasm. In terms of biological role, peptide chain release factor 2 directs the termination of translation in response to the peptide chain termination codons UGA and UAA. In Helicobacter pylori (strain G27), this protein is Peptide chain release factor 2.